Consider the following 199-residue polypeptide: Lysine exporter LysE (199 aa).

The next 5 helical transmembrane spans lie at 6 to 26 (VVGF…NAFV), 42 to 62 (LCTV…GALI), 68 to 88 (ALNV…LLAA), 144 to 164 (WLFG…LGFG), and 178 to 198 (WRIL…SLTV).

Belongs to the LysE/ArgO transporter (TC 2.A.75) family.

It is found in the cell inner membrane. Functionally, catalyzes the efflux of L-lysine. The chain is Lysine exporter LysE from Mycobacterium bovis (strain ATCC BAA-935 / AF2122/97).